A 202-amino-acid polypeptide reads, in one-letter code: Na(+)-translocating NADH-quinone reductase subunit E (202 aa).

6 consecutive transmembrane segments (helical) span residues 11–31 (SIFM…FLAV), 41–61 (LGVA…IIYF), 81–101 (FLGF…LEMV), 114–134 (GIYL…LFMV), 144–164 (LVYG…LAGI), and 180–200 (LGIT…FSGI).

The protein belongs to the NqrDE/RnfAE family. In terms of assembly, composed of six subunits; NqrA, NqrB, NqrC, NqrD, NqrE and NqrF.

Its subcellular location is the cell inner membrane. It catalyses the reaction a ubiquinone + n Na(+)(in) + NADH + H(+) = a ubiquinol + n Na(+)(out) + NAD(+). In terms of biological role, NQR complex catalyzes the reduction of ubiquinone-1 to ubiquinol by two successive reactions, coupled with the transport of Na(+) ions from the cytoplasm to the periplasm. NqrA to NqrE are probably involved in the second step, the conversion of ubisemiquinone to ubiquinol. This Psychromonas ingrahamii (strain DSM 17664 / CCUG 51855 / 37) protein is Na(+)-translocating NADH-quinone reductase subunit E.